We begin with the raw amino-acid sequence, 454 residues long: Probable xylan O-acetyltransferase 9 (454 aa).

Over 1 to 15 (MKAPPPPSPVAKRAR) the chain is Cytoplasmic. Residues 16 to 36 (VSPFVFLLVLFLLLFSFLYGE) traverse the membrane as a helical; Signal-anchor for type II membrane protein segment. Topologically, residues 37–454 (DLKELLGSQA…ELLYTKLFYP (418 aa)) are lumenal. Cystine bridges form between C101–C152, C123–C188, C132–C435, and C352–C431. The short motif at 175–177 (GDS) is the GDS motif element. The active-site Nucleophile is the S177. N-linked (GlcNAc...) asparagine glycosylation is found at N219, N293, and N394. D430 functions as the Proton donor in the catalytic mechanism. The short motif at 430 to 433 (DCVH) is the DXXH motif element. The active-site Proton acceptor is H433.

It belongs to the PC-esterase family. TBL subfamily.

It is found in the golgi apparatus membrane. Its function is as follows. Probable xylan acetyltransferase required for 2-O- and 3-O-monoacetylation of xylosyl residues in xylan. Possesses extremely low activity in vitro. The protein is Probable xylan O-acetyltransferase 9 of Oryza sativa subsp. japonica (Rice).